The chain runs to 122 residues: Acidic phospholipase A2 Tpu-E6b (122 aa).

7 disulfides stabilise this stretch: Cys-26-Cys-115, Cys-28-Cys-44, Cys-43-Cys-95, Cys-49-Cys-122, Cys-50-Cys-88, Cys-57-Cys-81, and Cys-75-Cys-86. Residues Tyr-27, Gly-29, and Gly-31 each contribute to the Ca(2+) site. Residue His-47 is part of the active site. A Ca(2+)-binding site is contributed by Asp-48. Asp-89 is a catalytic residue.

As to quaternary structure, monomer. Ca(2+) is required as a cofactor. Expressed by the venom gland.

Its subcellular location is the secreted. It catalyses the reaction a 1,2-diacyl-sn-glycero-3-phosphocholine + H2O = a 1-acyl-sn-glycero-3-phosphocholine + a fatty acid + H(+). In terms of biological role, snake venom phospholipase A2 (PLA2) that weakly inhibits ADP-induced platelet aggregation when tested on platelet rich plasma from human and rabbit blood (15-25% of inhibition at 5-10 ug of enzyme). Exhibits moderate hydrolytic activities toward L-dipalmitoyl phosphatidylcholine. PLA2 catalyzes the calcium-dependent hydrolysis of the 2-acyl groups in 3-sn-phosphoglycerides. The protein is Acidic phospholipase A2 Tpu-E6b of Craspedocephalus puniceus (Flat-nosed pitviper).